Here is a 141-residue protein sequence, read N- to C-terminus: Aspartate 1-decarboxylase (141 aa).

Catalysis depends on S25, which acts as the Schiff-base intermediate with substrate; via pyruvic acid. A Pyruvic acid (Ser) modification is found at S25. T57 serves as a coordination point for substrate. The Proton donor role is filled by Y58. Residue 73-75 (GAA) participates in substrate binding.

This sequence belongs to the PanD family. As to quaternary structure, heterooctamer of four alpha and four beta subunits. Pyruvate serves as cofactor. Is synthesized initially as an inactive proenzyme, which is activated by self-cleavage at a specific serine bond to produce a beta-subunit with a hydroxyl group at its C-terminus and an alpha-subunit with a pyruvoyl group at its N-terminus.

It is found in the cytoplasm. It catalyses the reaction L-aspartate + H(+) = beta-alanine + CO2. It functions in the pathway cofactor biosynthesis; (R)-pantothenate biosynthesis; beta-alanine from L-aspartate: step 1/1. Its function is as follows. Catalyzes the pyruvoyl-dependent decarboxylation of aspartate to produce beta-alanine. The protein is Aspartate 1-decarboxylase of Salinispora arenicola (strain CNS-205).